The sequence spans 596 residues: MENIRNFSIIAHIDHGKSTLADRLIQECGAIEDRKMSDQVMDTMDIEKERGITIKAQSVRLTYKKDGKEYILNLIDTPGHVDFSYEVSRSLASSEGALLVVDASQGVEAQTIANVYIALENDLELIPVINKIDLPAADPERVKADIENTIGLDCTDAIEVSAKTGQGINELLDAIIERIPAPSGDPTAPTKALIYDSWFDSYLGALALVRVFEGEIKKGQEVLVMGTGKTHEVIDLMYPHPINPQKTSTIKTGEIGIVVMGLKNIGDVQVGDTITDAKNPTPEPIEGFEEAKPFVFAGLYPIDTDKFEDLREALNKLKLNDAAIAFEPETSAALGFGFRVGFLGLLHMEVVKERLEREFGLDLIATAPTVTYKVKKTDGETIEIQNPSELPPPQEIDTIYEPYVKATIITPTEFLGNVLNLLSEKRGVQLKMDYITQDRVMLEYEIPMNEIVMDFYDKLKTVTKGYASFDYEPSGYKEGDLVKLDIRVAGEVVDALSIIVPKEKAQYKGRELVKKMKELVPRQLFEVAIQASIGNKIIARETVSAMRKNVTAKCYGGDITRKRKLLEKQKEGKKRMKAIGKVQLPQEAFLSVLKID.

A tr-type G domain is found at 2–183; the sequence is ENIRNFSIIA…AIIERIPAPS (182 aa). GTP is bound by residues 14–19 and 130–133; these read DHGKST and NKID.

It belongs to the TRAFAC class translation factor GTPase superfamily. Classic translation factor GTPase family. LepA subfamily.

It localises to the cell inner membrane. The catalysed reaction is GTP + H2O = GDP + phosphate + H(+). Required for accurate and efficient protein synthesis under certain stress conditions. May act as a fidelity factor of the translation reaction, by catalyzing a one-codon backward translocation of tRNAs on improperly translocated ribosomes. Back-translocation proceeds from a post-translocation (POST) complex to a pre-translocation (PRE) complex, thus giving elongation factor G a second chance to translocate the tRNAs correctly. Binds to ribosomes in a GTP-dependent manner. The protein is Elongation factor 4 of Nitratiruptor sp. (strain SB155-2).